The primary structure comprises 174 residues: DNA-directed RNA polymerase IV subunit 7 (174 aa).

This sequence belongs to the eukaryotic RPB7/RPC8 RNA polymerase subunit family. In terms of assembly, component of the RNA polymerase IV complex. Interacts with NRPD1.

The protein resides in the nucleus. Its function is as follows. DNA-dependent RNA polymerase catalyzes the transcription of DNA into RNA using the four ribonucleoside triphosphates as substrates. Component of RNA polymerase IV which mediates 24-nt short-interfering RNAs (siRNA) accumulation. Implicated in siRNA-directed heterochromatin formation through the action of DCL3 and AGO4, and subsequent DNA methylation-dependent silencing of targeted sequences. Essential component of a self-reinforcing loop coupling de novo DNA methylation to siRNA production. Required for intercellular but not intracellular RNA interference (RNAi) leading to systemic post-transcriptional gene silencing. Involved in the maintenance of post-transcriptional RNA silencing. The protein is DNA-directed RNA polymerase IV subunit 7 (NRPD7) of Arabidopsis thaliana (Mouse-ear cress).